The following is a 126-amino-acid chain: Fluoride-specific ion channel FluC (126 aa).

A run of 4 helical transmembrane segments spans residues 9 to 29 (LAVF…GFQL), 35 to 55 (LTAT…LYAI), 63 to 83 (LLHL…SFVL), and 94 to 114 (WSIG…AAIL). 2 residues coordinate Na(+): glycine 73 and serine 76.

The protein belongs to the fluoride channel Fluc/FEX (TC 1.A.43) family.

It is found in the cell inner membrane. The enzyme catalyses fluoride(in) = fluoride(out). Na(+) is not transported, but it plays an essential structural role and its presence is essential for fluoride channel function. Fluoride-specific ion channel. Important for reducing fluoride concentration in the cell, thus reducing its toxicity. This is Fluoride-specific ion channel FluC from Ruegeria pomeroyi (strain ATCC 700808 / DSM 15171 / DSS-3) (Silicibacter pomeroyi).